Here is a 500-residue protein sequence, read N- to C-terminus: L-arabinose isomerase (500 aa).

Positions 306, 333, 349, and 448 each coordinate Mn(2+).

The protein belongs to the arabinose isomerase family. The cofactor is Mn(2+).

It carries out the reaction beta-L-arabinopyranose = L-ribulose. It participates in carbohydrate degradation; L-arabinose degradation via L-ribulose; D-xylulose 5-phosphate from L-arabinose (bacterial route): step 1/3. Functionally, catalyzes the conversion of L-arabinose to L-ribulose. This chain is L-arabinose isomerase, found in Shewanella baltica (strain OS223).